The following is a 565-amino-acid chain: NAD-dependent malic enzyme (565 aa).

The Proton donor role is filled by tyrosine 104. Position 157 (arginine 157) interacts with NAD(+). Lysine 175 serves as the catalytic Proton acceptor. The a divalent metal cation site is built by glutamate 246, aspartate 247, and aspartate 270. NAD(+) contacts are provided by aspartate 270 and asparagine 418.

The protein belongs to the malic enzymes family. In terms of assembly, homotetramer. Mg(2+) serves as cofactor. Mn(2+) is required as a cofactor.

It carries out the reaction (S)-malate + NAD(+) = pyruvate + CO2 + NADH. The catalysed reaction is oxaloacetate + H(+) = pyruvate + CO2. This is NAD-dependent malic enzyme from Serratia proteamaculans (strain 568).